Consider the following 848-residue polypeptide: MWLRLGPPSLSLSPKPTVGRSLCLTLWFLSLALRASTQAPAPTVNTHFGKLRGARVPLPSEILGPVDQYLGVPYAAPPIGEKRFLPPEPPPSWSGIRNATHFPPVCPQNIHTAVPEVMLPVWFTANLDIVATYIQEPNEDCLYLNVYVPTEDVKRISKECARKPNKKICRKGGSGAKKQGEDLADNDGDEDEDIRDSGAKPVMVYIHGGSYMEGTGNMIDGSILASYGNVIVITLNYRVGVLGFLSTGDQAAKGNYGLLDQIQALRWVSENIAFFGGDPRRITVFGSGIGASCVSLLTLSHHSEGLFQRAIIQSGSALSSWAVNYQPVKYTSLLADKVGCNVLDTVDMVDCLRQKSAKELVEQDIQPARYHVAFGPVIDGDVIPDDPEILMEQGEFLNYDIMLGVNQGEGLKFVEGVVDPEDGVSGTDFDYSVSNFVDNLYGYPEGKDTLRETIKFMYTDWADRDNPETRRKTLVALFTDHQWVEPSVVTADLHARYGSPTYFYAFYHHCQSLMKPAWSDAAHGDEVPYVFGVPMVGPTDLFPCNFSKNDVMLSAVVMTYWTNFAKTGDPNKPVPQDTKFIHTKANRFEEVAWSKYNPRDQLYLHIGLKPRVRDHYRATKVAFWKHLVPHLYNLHDMFHYTSTTTKVPPPDTTHSSHITRRPNGKTWSTKRPAISPAYSNENAQGSWNGDQDAGPLLVENPRDYSTELSVTIAVGASLLFLNVLAFAALYYRKDKRRQEPLRQPSPQRGAGAPELGAAPEEELAALQLGPTHHECEAGPPHDTLRLTALPDYTLTLRRSPDDIPLMTPNTITMIPNSLVGLQTLHPYNTFAAGFNSTGLPHSHSTTRV.

Positions 1–37 (MWLRLGPPSLSLSPKPTVGRSLCLTLWFLSLALRAST) are cleaved as a signal peptide. Topologically, residues 38–709 (QAPAPTVNTH…NPRDYSTELS (672 aa)) are extracellular. Residue asparagine 98 is glycosylated (N-linked (GlcNAc...) asparagine). Residues cysteine 106 and cysteine 141 are joined by a disulfide bond. The tract at residues 170-195 (RKGGSGAKKQGEDLADNDGDEDEDIR) is disordered. Positions 182 to 194 (DLADNDGDEDEDI) are enriched in acidic residues. 2 disulfide bridges follow: cysteine 340-cysteine 351 and cysteine 510-cysteine 544. A glycan (N-linked (GlcNAc...) asparagine) is linked at asparagine 545. 2 stretches are compositionally biased toward polar residues: residues 645–656 (TKVPPPDTTHSS) and 677–689 (AYSNENAQGSWNG). Residues 645 to 694 (TKVPPPDTTHSSHITRRPNGKTWSTKRPAISPAYSNENAQGSWNGDQDAG) are disordered. Residues 710 to 730 (VTIAVGASLLFLNVLAFAALY) form a helical membrane-spanning segment. The Cytoplasmic segment spans residues 731–848 (YRKDKRRQEP…LPHSHSTTRV (118 aa)). Serine 745 carries the post-translational modification Phosphoserine. Residue tyrosine 792 is modified to Phosphotyrosine.

It belongs to the type-B carboxylesterase/lipase family. Homodimer, and heterodimer with NLGN1 and NLGN2. Interacts with neurexins NRXN1, NRXN2 and NRXN3. Interaction with neurexins is mediated by heparan sulfate glycan modification on neurexin. Interacts (via its C-terminus) with DLG4/PSD-95 (via PDZ domain 3). As to expression, expressed in the blood vessel walls (at protein level). Detected in throughout the brain and in spinal cord. Detected in brain, and at lower levels in pancreas islet beta cells.

It localises to the cell membrane. Its subcellular location is the synapse. In terms of biological role, cell surface protein involved in cell-cell-interactions via its interactions with neurexin family members. Plays a role in synapse function and synaptic signal transmission, and may mediate its effects by clustering other synaptic proteins. May promote the initial formation of synapses, but is not essential for this. May also play a role in glia-glia or glia-neuron interactions in the developing peripheral nervous system. This chain is Neuroligin-3 (NLGN3), found in Homo sapiens (Human).